Reading from the N-terminus, the 257-residue chain is NAD-capped RNA hydrolase NudC (257 aa).

Substrate is bound by residues K25 and R69. Residues C98 and C101 each coordinate Zn(2+). Substrate is bound at residue E111. Positions 116 and 119 each coordinate Zn(2+). Y124 provides a ligand contact to substrate. The Nudix hydrolase domain occupies 125 to 248; the sequence is PQIAPCIIVA…TVARRLIEDT (124 aa). 3 residues coordinate a divalent metal cation: A158, E174, and E178. The Nudix box signature appears at 159–180; the sequence is GFVEVGETLEQAVAREVMEESG. 192 to 199 is a binding site for substrate; sequence QPWPFPQS. A divalent metal cation is bound at residue E219. Residue A241 coordinates substrate.

The protein belongs to the Nudix hydrolase family. NudC subfamily. As to quaternary structure, homodimer. Mg(2+) is required as a cofactor. It depends on Mn(2+) as a cofactor. Requires Zn(2+) as cofactor.

It carries out the reaction a 5'-end NAD(+)-phospho-ribonucleoside in mRNA + H2O = a 5'-end phospho-adenosine-phospho-ribonucleoside in mRNA + beta-nicotinamide D-ribonucleotide + 2 H(+). The catalysed reaction is NAD(+) + H2O = beta-nicotinamide D-ribonucleotide + AMP + 2 H(+). It catalyses the reaction NADH + H2O = reduced beta-nicotinamide D-ribonucleotide + AMP + 2 H(+). MRNA decapping enzyme that specifically removes the nicotinamide adenine dinucleotide (NAD) cap from a subset of mRNAs by hydrolyzing the diphosphate linkage to produce nicotinamide mononucleotide (NMN) and 5' monophosphate mRNA. The NAD-cap is present at the 5'-end of some mRNAs and stabilizes RNA against 5'-processing. Has preference for mRNAs with a 5'-end purine. Catalyzes the hydrolysis of a broad range of dinucleotide pyrophosphates. The chain is NAD-capped RNA hydrolase NudC from Escherichia coli O157:H7.